The sequence spans 956 residues: DNA replication helicase (956 aa).

120–127 (GTAGAGKT) contributes to the ATP binding site. The interval 658–694 (PINNHVDADSSQGGQSVPVSQRMEHGQEETHDIPCLS) is disordered. Low complexity predominate over residues 667-678 (SSQGGQSVPVSQ). Basic and acidic residues predominate over residues 679–694 (RMEHGQEETHDIPCLS).

It belongs to the herpesviridae helicase family. As to quaternary structure, associates with the primase and the primase-associated factor to form the helicase-primase complex.

Its subcellular location is the host nucleus. Its function is as follows. Component of the helicase/primase complex. Unwinds the DNA at the replication forks and generates single-stranded DNA for both leading and lagging strand synthesis. The primase synthesizes short RNA primers on the lagging strand that the polymerase elongates using dNTPs. Possesses helicase-like motifs and therefore may act as the helicase subunit of the complex. The polypeptide is DNA replication helicase (Human cytomegalovirus (strain AD169) (HHV-5)).